A 327-amino-acid polypeptide reads, in one-letter code: Microtubule-associated protein RP/EB family member 2 (327 aa).

Residues methionine 1–aspartate 17 show a composition bias toward polar residues. Residues methionine 1–histidine 20 form a disordered region. One can recognise a Calponin-homology (CH) domain in the interval threonine 56 to aspartate 158. Disordered stretches follow at residues glutamate 170–leucine 238 and leucine 295–tyrosine 327. The EB1 C-terminal domain occupies serine 234 to histidine 304.

It belongs to the MAPRE family.

Its subcellular location is the cytoplasm. It is found in the cytoskeleton. Its function is as follows. May be involved in microtubule polymerization, and spindle function by stabilizing microtubules and anchoring them at centrosomes. The polypeptide is Microtubule-associated protein RP/EB family member 2 (mapre2) (Xenopus laevis (African clawed frog)).